Here is a 432-residue protein sequence, read N- to C-terminus: 3-phosphoshikimate 1-carboxyvinyltransferase (432 aa).

3-phosphoshikimate contacts are provided by lysine 23, serine 24, and arginine 28. Residue lysine 23 coordinates phosphoenolpyruvate. Phosphoenolpyruvate-binding residues include glycine 96 and arginine 125. Residues serine 170, glutamine 172, aspartate 318, and lysine 345 each coordinate 3-phosphoshikimate. Glutamine 172 lines the phosphoenolpyruvate pocket. Residue aspartate 318 is the Proton acceptor of the active site. The phosphoenolpyruvate site is built by arginine 349 and arginine 391.

The protein belongs to the EPSP synthase family. In terms of assembly, monomer.

The protein resides in the cytoplasm. It carries out the reaction 3-phosphoshikimate + phosphoenolpyruvate = 5-O-(1-carboxyvinyl)-3-phosphoshikimate + phosphate. It participates in metabolic intermediate biosynthesis; chorismate biosynthesis; chorismate from D-erythrose 4-phosphate and phosphoenolpyruvate: step 6/7. Catalyzes the transfer of the enolpyruvyl moiety of phosphoenolpyruvate (PEP) to the 5-hydroxyl of shikimate-3-phosphate (S3P) to produce enolpyruvyl shikimate-3-phosphate and inorganic phosphate. The polypeptide is 3-phosphoshikimate 1-carboxyvinyltransferase (Gloeobacter violaceus (strain ATCC 29082 / PCC 7421)).